Here is a 402-residue protein sequence, read N- to C-terminus: Zinc finger CCHC domain-containing protein 12 (402 aa).

Residues 268–277 show a composition bias toward acidic residues; it reads DTPDDSDEDV. A disordered region spans residues 268-342; the sequence is DTPDDSDEDV…PGNMRRTRKR (75 aa). The segment covering 311–323 has biased composition (polar residues); the sequence is SPNNSQFPSPCTS. The CCHC-type zinc finger occupies 346-363; the sequence is IRCSYCGEEGHSKETCDN. Over residues 383–392 the composition is skewed to basic and acidic residues; it reads HTEERSREAP. The segment at 383–402 is disordered; sequence HTEERSREAPVEPSDPCELQ.

This sequence belongs to the ZCCHC12 family. Interacts with SMAD1 and CREB-binding protein (CBP). Forms a protein-DNA complex through its association with SMAD1.

Functionally, transcriptional coactivator in the bone morphogenetic protein (BMP)-signaling pathway. It positively modulates BMP signaling by interacting with SMAD1 and associating with CBP in the transcription complex. It contributes to the BMP-induced enhancement of cholinergic-neuron-specific gene expression. In Bos taurus (Bovine), this protein is Zinc finger CCHC domain-containing protein 12 (ZCCHC12).